We begin with the raw amino-acid sequence, 248 residues long: Probable transcriptional regulatory protein MYPE8020 (248 aa).

It belongs to the TACO1 family.

Its subcellular location is the cytoplasm. In Malacoplasma penetrans (strain HF-2) (Mycoplasma penetrans), this protein is Probable transcriptional regulatory protein MYPE8020.